The primary structure comprises 187 residues: Choriogonadotropin subunit beta variant 1 (187 aa).

A signal peptide spans 1–50 (MSTFPVLAEDIPLRERHVKGRVDPHFRAPKMEMFQRLLLLLLLSMGGTWA). 6 disulfide bridges follow: Cys-59/Cys-107, Cys-73/Cys-122, Cys-76/Cys-160, Cys-84/Cys-138, Cys-88/Cys-140, and Cys-143/Cys-150. Asn-63 and Asn-80 each carry an N-linked (GlcNAc...) asparagine glycan. A disordered region spans residues 161-187 (DDPRFQDSSSSKAPPPSLPSPSRLPGP). Pro residues predominate over residues 173-187 (APPPSLPSPSRLPGP).

The protein belongs to the glycoprotein hormones subunit beta family. In terms of tissue distribution, expressed in placenta, testis and pituitary.

The protein localises to the secreted. In Homo sapiens (Human), this protein is Choriogonadotropin subunit beta variant 1 (CGB1).